Here is a 349-residue protein sequence, read N- to C-terminus: Anthranilate phosphoribosyltransferase (349 aa).

Residues Gly-82, 85-86, 92-95, 110-118, and Ser-122 each bind 5-phospho-alpha-D-ribose 1-diphosphate; these read GD, NVST, and KHGNRAVSG. Residue Gly-82 coordinates anthranilate. Mg(2+) is bound at residue Ser-94. Position 113 (Asn-113) interacts with anthranilate. Arg-168 contributes to the anthranilate binding site. Residues Asp-227 and Glu-228 each contribute to the Mg(2+) site.

The protein belongs to the anthranilate phosphoribosyltransferase family. Homodimer. The cofactor is Mg(2+).

The enzyme catalyses N-(5-phospho-beta-D-ribosyl)anthranilate + diphosphate = 5-phospho-alpha-D-ribose 1-diphosphate + anthranilate. It functions in the pathway amino-acid biosynthesis; L-tryptophan biosynthesis; L-tryptophan from chorismate: step 2/5. Catalyzes the transfer of the phosphoribosyl group of 5-phosphorylribose-1-pyrophosphate (PRPP) to anthranilate to yield N-(5'-phosphoribosyl)-anthranilate (PRA). This chain is Anthranilate phosphoribosyltransferase, found in Pseudomonas putida (Arthrobacter siderocapsulatus).